A 365-amino-acid chain; its full sequence is Aminomethyltransferase (365 aa).

Belongs to the GcvT family. The glycine cleavage system is composed of four proteins: P, T, L and H.

The catalysed reaction is N(6)-[(R)-S(8)-aminomethyldihydrolipoyl]-L-lysyl-[protein] + (6S)-5,6,7,8-tetrahydrofolate = N(6)-[(R)-dihydrolipoyl]-L-lysyl-[protein] + (6R)-5,10-methylene-5,6,7,8-tetrahydrofolate + NH4(+). The glycine cleavage system catalyzes the degradation of glycine. The chain is Aminomethyltransferase from Parafrankia sp. (strain EAN1pec).